Reading from the N-terminus, the 528-residue chain is Tyrosine-protein kinase transforming protein Yes (528 aa).

Residues Asp1–Asn12 are compositionally biased toward basic and acidic residues. Residues Asp1–Pro35 are disordered. A compositionally biased stretch (low complexity) spans Ser18–Ser29. The 62-residue stretch at Gly81–Ser142 folds into the SH3 domain. The SH2 domain occupies Trp148–Cys245. One can recognise a Protein kinase domain in the interval Leu267–Phe520. Residues Leu273–Val281 and Lys295 contribute to the ATP site. Asp386 serves as the catalytic Proton acceptor. Residue Tyr416 is modified to Phosphotyrosine; by autocatalysis.

The protein belongs to the protein kinase superfamily. Tyr protein kinase family. SRC subfamily.

It catalyses the reaction L-tyrosyl-[protein] + ATP = O-phospho-L-tyrosyl-[protein] + ADP + H(+). This Galliformes (Y73SV) protein is Tyrosine-protein kinase transforming protein Yes (V-YES).